A 413-amino-acid chain; its full sequence is Cardiolipin synthase B (413 aa).

PLD phosphodiesterase domains lie at 108 to 135 (IFRR…SAEH) and 285 to 312 (RRRP…DPLS). Active-site residues include H113, K115, D120, H290, K292, and D297. Residues 388–413 (AQVPPPAQPEMETQDRVDPENSGVKP) form a disordered region.

This sequence belongs to the phospholipase D family. Cardiolipin synthase subfamily. ClsB sub-subfamily.

It localises to the cell membrane. It carries out the reaction 2 a 1,2-diacyl-sn-glycero-3-phospho-(1'-sn-glycerol) = a cardiolipin + glycerol. In terms of biological role, catalyzes the phosphatidyl group transfer from one phosphatidylglycerol molecule to another to form cardiolipin (CL) (diphosphatidylglycerol) and glycerol. This chain is Cardiolipin synthase B, found in Salmonella typhi.